Consider the following 928-residue polypeptide: Putative replication origin binding protein (928 aa).

The 131-residue stretch at 386–516 (NIVPPKGHIT…QVLRDILMTA (131 aa)) folds into the Helicase ATP-binding domain. 399–406 (ASLGTGKT) provides a ligand contact to ATP. Positions 484–487 (DECD) match the DEAD box motif.

This sequence belongs to the herpesviridae oribp family.

Its function is as follows. Displays bipolar ssDNA and dsDNA unwinding activities that require the same core catalytic residues for unwinding in either direction, the 3'-5' direction being more robust. The chain is Putative replication origin binding protein from Escherichia coli (Enterobacteria phage T5).